The sequence spans 232 residues: Large ribosomal subunit protein uL1 (232 aa).

The protein belongs to the universal ribosomal protein uL1 family. In terms of assembly, part of the 50S ribosomal subunit.

In terms of biological role, binds directly to 23S rRNA. The L1 stalk is quite mobile in the ribosome, and is involved in E site tRNA release. Protein L1 is also a translational repressor protein, it controls the translation of the L11 operon by binding to its mRNA. In Burkholderia multivorans (strain ATCC 17616 / 249), this protein is Large ribosomal subunit protein uL1.